A 1036-amino-acid polypeptide reads, in one-letter code: Chitin synthase 1 (1036 aa).

Over residues 1–10 (MDGPPSPTRV) the composition is skewed to pro residues. Residues 1-153 (MDGPPSPTRV…RRPLPPAPLF (153 aa)) form a disordered region. Asn38 is a glycosylation site (N-linked (GlcNAc...) asparagine). Low complexity predominate over residues 86–108 (PSIPLSSSNPRSPIRPSTPSRVS). An N-linked (GlcNAc...) asparagine glycan is attached at Asn179. The tract at residues 189-229 (RASLKSAHSYTTDSTFTEDDDITNEKLNHYGPAPEGRQDRR) is disordered. Positions 194–203 (SAHSYTTDST) are enriched in polar residues. 7 helical membrane-spanning segments follow: residues 659 to 679 (FISL…FYFV), 699 to 719 (IFVI…ILSL), 733 to 753 (TMVT…YIVI), 776 to 796 (IFTN…LMSF), 808 to 828 (SAQY…YAFC), 908 to 928 (YVVA…SEAY), and 945 to 967 (WSVA…INIV). The disordered stretch occupies residues 994-1019 (AGLGSGFSESGKTGITSGSGMSGMSL). A compositionally biased stretch (low complexity) spans 1001–1019 (SESGKTGITSGSGMSGMSL).

It belongs to the chitin synthase family. Class II subfamily.

The protein localises to the cell membrane. It carries out the reaction [(1-&gt;4)-N-acetyl-beta-D-glucosaminyl](n) + UDP-N-acetyl-alpha-D-glucosamine = [(1-&gt;4)-N-acetyl-beta-D-glucosaminyl](n+1) + UDP + H(+). Polymerizes chitin, a structural polymer of the cell wall and septum, by transferring the sugar moiety of UDP-GlcNAc to the non-reducing end of the growing chitin polymer. CHS1 mainly responsible for normal yeast cell reproductive growth. The polypeptide is Chitin synthase 1 (Exophiala dermatitidis (strain ATCC 34100 / CBS 525.76 / NIH/UT8656) (Black yeast)).